The primary structure comprises 624 residues: DNA mismatch repair protein MutL (624 aa).

Belongs to the DNA mismatch repair MutL/HexB family.

This protein is involved in the repair of mismatches in DNA. It is required for dam-dependent methyl-directed DNA mismatch repair. May act as a 'molecular matchmaker', a protein that promotes the formation of a stable complex between two or more DNA-binding proteins in an ATP-dependent manner without itself being part of a final effector complex. The chain is DNA mismatch repair protein MutL from Chlorobium phaeobacteroides (strain DSM 266 / SMG 266 / 2430).